The sequence spans 184 residues: Small ribosomal subunit protein uS7 (184 aa).

It belongs to the universal ribosomal protein uS7 family. As to quaternary structure, part of the 30S ribosomal subunit.

One of the primary rRNA binding proteins, it binds directly to 16S rRNA where it nucleates assembly of the head domain of the 30S subunit. Is located at the subunit interface close to the decoding center. The polypeptide is Small ribosomal subunit protein uS7 (Thermoplasma volcanium (strain ATCC 51530 / DSM 4299 / JCM 9571 / NBRC 15438 / GSS1)).